The sequence spans 579 residues: Laccase-4 (579 aa).

The first 28 residues, 1–28, serve as a signal peptide directing secretion; that stretch reads MTMAISSALPSPLLLAASLLLLIVQAQG. Plastocyanin-like domains follow at residues 36-152 and 162-316; these read NVQM…PKLG and KEVP…YENP. 2 N-linked (GlcNAc...) asparagine glycosylation sites follow: Asn41 and Asn82. Cu cation contacts are provided by His86 and His88. Asn118 is a glycosylation site (N-linked (GlcNAc...) asparagine). Cu cation contacts are provided by His131 and His133. 12 N-linked (GlcNAc...) asparagine glycosylation sites follow: Asn191, Asn207, Asn243, Asn304, Asn340, Asn347, Asn386, Asn393, Asn403, Asn439, Asn446, and Asn462. Residues 429-563 form the Plastocyanin-like 3 domain; that stretch reads DFPVAPLSPF…RMAWLVLDGS (135 aa). Cu cation is bound by residues His480, His483, His485, His542, Cys543, His544, and His548.

The protein belongs to the multicopper oxidase family. The cofactor is Cu cation.

Its subcellular location is the secreted. It localises to the extracellular space. The protein localises to the apoplast. The enzyme catalyses 4 hydroquinone + O2 = 4 benzosemiquinone + 2 H2O. In terms of biological role, lignin degradation and detoxification of lignin-derived products. The chain is Laccase-4 (LAC4) from Oryza sativa subsp. japonica (Rice).